Reading from the N-terminus, the 714-residue chain is Polyribonucleotide nucleotidyltransferase (714 aa).

Positions 488 and 494 each coordinate Mg(2+). The region spanning 555 to 614 (PRIEVMNIPTDKIRDVIGSGGKVIREIVEKTGAKINIEDDGTVKIASSNGKEIEAAKKWI) is the KH domain. In terms of domain architecture, S1 motif spans 624 to 692 (GEIYEGTVVK…ERGKVRLSMK (69 aa)).

Belongs to the polyribonucleotide nucleotidyltransferase family. Mg(2+) is required as a cofactor.

Its subcellular location is the cytoplasm. The enzyme catalyses RNA(n+1) + phosphate = RNA(n) + a ribonucleoside 5'-diphosphate. Involved in mRNA degradation. Catalyzes the phosphorolysis of single-stranded polyribonucleotides processively in the 3'- to 5'-direction. The protein is Polyribonucleotide nucleotidyltransferase of Brucella abortus biovar 1 (strain 9-941).